Consider the following 400-residue polypeptide: Poly(A) polymerase type 3 (400 aa).

Residues 97-99, Thr-106, 110-112, Asp-164, Lys-225, Tyr-234, and 243-244 contribute to the ATP site; these read FGS, DID, and GV. Residues Asp-110, Asp-112, and Asp-164 each coordinate Mg(2+). The short motif at 382 to 390 is the Nuclear localization signal element; it reads GEIINKNKK.

Belongs to the poly(A) polymerase family. In terms of assembly, monomer. It depends on Mg(2+) as a cofactor. Mn(2+) is required as a cofactor.

The protein resides in the nucleus. The enzyme catalyses RNA(n) + ATP = RNA(n)-3'-adenine ribonucleotide + diphosphate. Its function is as follows. Polymerase that creates the 3'-poly(A) tail of mRNA's. May acquire specificity through interaction with a cleavage and polyadenylation factor (CPSF). In Xenopus laevis (African clawed frog), this protein is Poly(A) polymerase type 3.